Consider the following 93-residue polypeptide: Alpha-defensin 21 (93 aa).

The first 19 residues, 1-19, serve as a signal peptide directing secretion; it reads MKTLVLLSALILLAYQVQT. The propeptide occupies 20 to 58; the sequence is DPIQNTDEETNTEEQPGEDDQAVSVSFGGQEGSALHEKL. Residues 22-43 form a disordered region; sequence IQNTDEETNTEEQPGEDDQAVS. Over residues 25–40 the composition is skewed to acidic residues; that stretch reads TDEETNTEEQPGEDDQ. Disulfide bonds link cysteine 64-cysteine 89, cysteine 66-cysteine 81, and cysteine 71-cysteine 88.

This sequence belongs to the alpha-defensin family.

It is found in the secreted. May have microbicidal activities. This is Alpha-defensin 21 (Defa21) from Mus musculus (Mouse).